We begin with the raw amino-acid sequence, 145 residues long: MNKELLEKCKQKLLEEKAKILERYLEKEETQQRLGEESKEPRDWEDIGQMTYTEELLDNLSNVEIATLREIDYALEKIEKGTYGICERCGEEIPEPRLCAIPWTRYCAKCAEEVERESGTYMPSYGVDMYNPENIQVEREDIGEA.

A dksA C4-type zinc finger spans residues 86–110; sequence CERCGEEIPEPRLCAIPWTRYCAKC.

This is an uncharacterized protein from Aquifex aeolicus (strain VF5).